Here is a 130-residue protein sequence, read N- to C-terminus: Small ribosomal subunit protein uS11 (130 aa).

This sequence belongs to the universal ribosomal protein uS11 family. Part of the 30S ribosomal subunit. Interacts with proteins S7 and S18. Binds to IF-3.

Functionally, located on the platform of the 30S subunit, it bridges several disparate RNA helices of the 16S rRNA. Forms part of the Shine-Dalgarno cleft in the 70S ribosome. The sequence is that of Small ribosomal subunit protein uS11 from Xylella fastidiosa (strain M12).